A 152-amino-acid chain; its full sequence is Ribosome maturation factor RimP (152 aa).

This sequence belongs to the RimP family.

The protein resides in the cytoplasm. In terms of biological role, required for maturation of 30S ribosomal subunits. The sequence is that of Ribosome maturation factor RimP from Serratia proteamaculans (strain 568).